We begin with the raw amino-acid sequence, 106 residues long: Urease subunit beta (106 aa).

The protein belongs to the urease beta subunit family. Heterotrimer of UreA (gamma), UreB (beta) and UreC (alpha) subunits. Three heterotrimers associate to form the active enzyme.

It is found in the cytoplasm. It carries out the reaction urea + 2 H2O + H(+) = hydrogencarbonate + 2 NH4(+). Its pathway is nitrogen metabolism; urea degradation; CO(2) and NH(3) from urea (urease route): step 1/1. The chain is Urease subunit beta from Prochlorococcus marinus (strain MIT 9301).